The primary structure comprises 416 residues: Enterobactin exporter EntS (416 aa).

At M1–A21 the chain is on the cytoplasmic side. The helical transmembrane segment at V22–V42 threads the bilayer. At Q43–G55 the chain is on the periplasmic side. A helical membrane pass occupies residues L56–A76. Over D77–K83 the chain is Cytoplasmic. Residues V84–L104 form a helical membrane-spanning segment. At L105 to S109 the chain is on the periplasmic side. Residues L110–A130 traverse the membrane as a helical segment. Over L131–R156 the chain is Cytoplasmic. A helical transmembrane segment spans residues L157–W177. Position 178 (N178) is a topological domain, periplasmic. A helical transmembrane segment spans residues Y179–L199. Topologically, residues P200–R218 are cytoplasmic. The helical transmembrane segment at F219 to A239 threads the bilayer. The Periplasmic segment spans residues S240–S256. Residues A257–T277 traverse the membrane as a helical segment. The Cytoplasmic segment spans residues S278–P287. A helical transmembrane segment spans residues G288–L307. Topologically, residues M308–L313 are periplasmic. Residues G314–L336 form a helical membrane-spanning segment. Residues Q337–N356 are Cytoplasmic-facing. Residues V357–V377 traverse the membrane as a helical segment. Residue A378 is a topological domain, periplasmic. The helical transmembrane segment at S379–V399 threads the bilayer. Residues E400–S416 are Cytoplasmic-facing.

Belongs to the major facilitator superfamily. EntS (TC 2.A.1.38) family.

The protein resides in the cell inner membrane. Its function is as follows. Component of an export pathway for enterobactin. The polypeptide is Enterobactin exporter EntS (Escherichia coli O7:K1 (strain IAI39 / ExPEC)).